The chain runs to 104 residues: N(4)-acetylcytidine amidohydrolase (104 aa).

The 96-residue stretch at 6–101 (TFFERFEHDI…EQLYMIRFKV (96 aa)) folds into the ASCH domain. The active-site Proton acceptor is Lys-20. The active-site Nucleophile is the Thr-23. Glu-73 serves as the catalytic Proton donor.

Belongs to the N(4)-acetylcytidine amidohydrolase family.

It carries out the reaction N(4)-acetylcytidine + H2O = cytidine + acetate + H(+). The enzyme catalyses N(4)-acetyl-2'-deoxycytidine + H2O = 2'-deoxycytidine + acetate + H(+). The catalysed reaction is N(4)-acetylcytosine + H2O = cytosine + acetate + H(+). In terms of biological role, catalyzes the hydrolysis of N(4)-acetylcytidine (ac4C). In Shewanella oneidensis (strain ATCC 700550 / JCM 31522 / CIP 106686 / LMG 19005 / NCIMB 14063 / MR-1), this protein is N(4)-acetylcytidine amidohydrolase.